The chain runs to 256 residues: Hydroxyacylglutathione hydrolase (256 aa).

Zn(2+) contacts are provided by His-57, His-59, Asp-61, His-62, His-115, Asp-134, and His-172.

Belongs to the metallo-beta-lactamase superfamily. Glyoxalase II family. In terms of assembly, monomer. Requires Zn(2+) as cofactor.

The catalysed reaction is an S-(2-hydroxyacyl)glutathione + H2O = a 2-hydroxy carboxylate + glutathione + H(+). The protein operates within secondary metabolite metabolism; methylglyoxal degradation; (R)-lactate from methylglyoxal: step 2/2. Thiolesterase that catalyzes the hydrolysis of S-D-lactoyl-glutathione to form glutathione and D-lactic acid. The sequence is that of Hydroxyacylglutathione hydrolase from Rhizobium meliloti (strain 1021) (Ensifer meliloti).